Consider the following 450-residue polypeptide: 3-phosphoshikimate 1-carboxyvinyltransferase (450 aa).

3-phosphoshikimate-binding residues include K23, S24, and R28. K23 is a phosphoenolpyruvate binding site. 2 residues coordinate phosphoenolpyruvate: G96 and R124. The 3-phosphoshikimate site is built by S167, S168, Q169, S196, E311, and H340. Q169 contacts phosphoenolpyruvate. E311 acts as the Proton acceptor in catalysis. Phosphoenolpyruvate-binding residues include R344, R385, and K410. The tract at residues 426 to 450 (GQGWGYPQPRSGQRARRATGQGSGG) is disordered.

Belongs to the EPSP synthase family. As to quaternary structure, monomer.

It is found in the cytoplasm. The enzyme catalyses 3-phosphoshikimate + phosphoenolpyruvate = 5-O-(1-carboxyvinyl)-3-phosphoshikimate + phosphate. It participates in metabolic intermediate biosynthesis; chorismate biosynthesis; chorismate from D-erythrose 4-phosphate and phosphoenolpyruvate: step 6/7. Catalyzes the transfer of the enolpyruvyl moiety of phosphoenolpyruvate (PEP) to the 5-hydroxyl of shikimate-3-phosphate (S3P) to produce enolpyruvyl shikimate-3-phosphate and inorganic phosphate. This chain is 3-phosphoshikimate 1-carboxyvinyltransferase, found in Mycobacterium tuberculosis (strain ATCC 25177 / H37Ra).